The sequence spans 98 residues: Protein S100-A13 (98 aa).

In terms of domain architecture, EF-hand spans Thr18–Val53. Residues Ser32, Glu37, Asp64, Asn66, Asp68, Glu70, and Glu75 each coordinate Ca(2+). Ser32 bears the Phosphoserine mark.

This sequence belongs to the S-100 family. In terms of assembly, homodimer. Part of a copper-dependent multiprotein complex containing S100A13, FGF1 and SYT1. Interacts with FGF1 and SYT1. Interacts with IL1A.

The protein resides in the cytoplasm. The protein localises to the secreted. Plays a role in the export of proteins that lack a signal peptide and are secreted by an alternative pathway. Binds two calcium ions per subunit. Binds one copper ion. Binding of one copper ion does not interfere with calcium binding. Required for the copper-dependent stress-induced export of IL1A and FGF1. The calcium-free protein binds to lipid vesicles containing phosphatidylserine, but not to vesicles containing phosphatidylcholine. This is Protein S100-A13 (S100A13) from Bos taurus (Bovine).